A 273-amino-acid chain; its full sequence is NADPH-dependent 7-cyano-7-deazaguanine reductase (273 aa).

A substrate-binding site is contributed by 81 to 83 (VES). 83 to 84 (SK) contacts NADPH. Cys-179 functions as the Thioimide intermediate in the catalytic mechanism. The Proton donor role is filled by Asp-186. Residue 218–219 (AE) participates in substrate binding. 247–248 (RG) is a binding site for NADPH.

The protein belongs to the GTP cyclohydrolase I family. QueF type 2 subfamily. Homodimer.

The protein resides in the cytoplasm. The enzyme catalyses 7-aminomethyl-7-carbaguanine + 2 NADP(+) = 7-cyano-7-deazaguanine + 2 NADPH + 3 H(+). The protein operates within tRNA modification; tRNA-queuosine biosynthesis. Catalyzes the NADPH-dependent reduction of 7-cyano-7-deazaguanine (preQ0) to 7-aminomethyl-7-deazaguanine (preQ1). The sequence is that of NADPH-dependent 7-cyano-7-deazaguanine reductase from Rickettsia bellii (strain OSU 85-389).